The chain runs to 239 residues: DNA damage-regulated autophagy modulator protein 1 (239 aa).

6 helical membrane-spanning segments follow: residues 15–35, 54–74, 91–111, 119–139, 162–182, and 201–221; these read ILVI…VLIG, SGVF…TMYT, IYFN…MGIV, VPAV…MYIL, MTVS…SILS, and TSAI…LTFI.

It belongs to the DRAM/TMEM150 family.

The protein resides in the lysosome membrane. Lysosomal modulator of autophagy that plays a central role in p53/TP53-mediated apoptosis. In Xenopus laevis (African clawed frog), this protein is DNA damage-regulated autophagy modulator protein 1 (dram1).